The sequence spans 942 residues: Valine--tRNA ligase (942 aa).

A 'HIGH' region motif is present at residues 43-53 (PNVTGTLHMGH). A 'KMSKS' region motif is present at residues 551–555 (KMSKS). Lys-554 contributes to the ATP binding site. The stretch at 876–942 (EGLVDLDAER…AGLREQRAKL (67 aa)) forms a coiled coil.

The protein belongs to the class-I aminoacyl-tRNA synthetase family. ValS type 1 subfamily. In terms of assembly, monomer.

The protein localises to the cytoplasm. The enzyme catalyses tRNA(Val) + L-valine + ATP = L-valyl-tRNA(Val) + AMP + diphosphate. In terms of biological role, catalyzes the attachment of valine to tRNA(Val). As ValRS can inadvertently accommodate and process structurally similar amino acids such as threonine, to avoid such errors, it has a 'posttransfer' editing activity that hydrolyzes mischarged Thr-tRNA(Val) in a tRNA-dependent manner. In Stenotrophomonas maltophilia (strain K279a), this protein is Valine--tRNA ligase.